The primary structure comprises 631 residues: MDFSQRFGVIVIGGGHAGTEAALASARMGVSTLLLTHNIETLGQMSCNPAIGGIGKSHLVREIDALGGAMGRATDKGGIQFRVLNARKGPAVRATRAQADRELYKAAIRGTLENQPNLTLFQQAVDDLVVENGRCVGVVTNMGLRFMADAVVLTAGTFLGGVIHIGLDNHQGGRAGDQPSNALACRLRELPFRVDRLKTGTPPRIDGKSVDFSVMEEQWGDNPLPVMSYLGKVEEHPQQVCCYITHTNAQTHDIIRSGFDRSPMFTGVIDGVGPRYCPSIEDKVNRYPDKDSHQIFVEPEGLNTHELYPNGISTSLPFDVQLQAVRSIRGFENAHITRPGYAIEYDYFNPQDLKHSLETQHMPGLFFAGQINGTTGYEEAGAQGLLAGLNAARLSQGKDAWTPRRDEAYIGVLVDDLITMGTQEPYRMFTSRAEYRLLLREDNADLRLTEKGRELGLVGDERWAAFNAKRDGMASEEQRLKTTWVRPKTPEAEAVNALIEKPLTHEYNLLDLLKRPELTYANLAEAVALADRPDSAVIEQMEILAKYAGYIDRQADEIEKLRAAETTALPVEFDYGQVKGLSNEVKQKLSEIRPQTLGQAGRIPGVTPAAISLLMIYLKKHHHQKKAAQQA.

FAD contacts are provided by residues 13–18 (GGGHAG), valine 125, and serine 180. 273-287 (GPRYCPSIEDKVNRY) is a binding site for NAD(+). Glutamine 370 lines the FAD pocket.

The protein belongs to the MnmG family. Homodimer. Heterotetramer of two MnmE and two MnmG subunits. Requires FAD as cofactor.

It localises to the cytoplasm. NAD-binding protein involved in the addition of a carboxymethylaminomethyl (cmnm) group at the wobble position (U34) of certain tRNAs, forming tRNA-cmnm(5)s(2)U34. This is tRNA uridine 5-carboxymethylaminomethyl modification enzyme MnmG from Alcanivorax borkumensis (strain ATCC 700651 / DSM 11573 / NCIMB 13689 / SK2).